The chain runs to 108 residues: UPF0060 membrane protein YnfA (108 aa).

Residues 1-5 are Periplasmic-facing; it reads MIKTT. Residues 6 to 26 traverse the membrane as a helical segment; sequence LLFFATALCEIIGCFLPWLWL. The Cytoplasmic portion of the chain corresponds to 27–30; that stretch reads KRNA. Residues 31 to 51 traverse the membrane as a helical segment; sequence SIWLLLPAGISLALFVWLLTL. The Periplasmic portion of the chain corresponds to 52-60; the sequence is HPAASGRVY. The chain crosses the membrane as a helical span at residues 61–81; it reads AAYGGVYVCTALMWLRVVDGV. The Cytoplasmic portion of the chain corresponds to 82 to 84; it reads KLT. The helical transmembrane segment at 85-105 threads the bilayer; sequence LYDWTGPLIALCGMLIIVVGW. Topologically, residues 106 to 108 are periplasmic; the sequence is GRT.

The protein belongs to the UPF0060 family.

It is found in the cell inner membrane. This is UPF0060 membrane protein YnfA from Escherichia coli O157:H7.